The sequence spans 122 residues: Large ribosomal subunit protein bL12 (122 aa).

Belongs to the bacterial ribosomal protein bL12 family. Homodimer. Part of the 50S ribosomal subunit; present in 4 copies per ribosome. Forms part of the ribosomal stalk which helps the ribosome interact with GTP-bound translation factors. Forms a pentameric L10(L12)2(L12)2 complex, where L10 forms an elongated spine to which 2 L12 dimers bind in a sequential fashion.

Its function is as follows. Forms part of the ribosomal stalk which helps the ribosome interact with GTP-bound translation factors. Is thus essential for accurate translation. This chain is Large ribosomal subunit protein bL12, found in Geobacillus stearothermophilus (Bacillus stearothermophilus).